The sequence spans 154 residues: Putative protein heh-1 (154 aa).

Positions 1 to 15 are cleaved as a signal peptide; it reads MKTVIFLALLGLAAA. 2 disulfides stabilise this stretch: cysteine 39/cysteine 50 and cysteine 97/cysteine 103.

The protein belongs to the NPC2 family.

It localises to the secreted. The chain is Putative protein heh-1 (heh-1) from Caenorhabditis elegans.